Here is a 466-residue protein sequence, read N- to C-terminus: Phytase A (466 aa).

The first 19 residues, 1–19 (MGVFVVLLSIATLFGSTSG), serve as a signal peptide directing secretion. Residue Asn27 is glycosylated (N-linked (GlcNAc...) asparagine). Cys31 and Cys40 are disulfide-bonded. The 1D-myo-inositol hexakisphosphate site is built by Tyr51, Arg81, His82, Arg85, and Thr88. 4 disulfide bridges follow: Cys71-Cys414, Cys215-Cys465, Cys264-Cys282, and Cys436-Cys444. His82 serves as the catalytic Nucleophile. Residues Asn105 and Asn120 are each glycosylated (N-linked (GlcNAc...) asparagine). Residue Arg165 coordinates 1D-myo-inositol hexakisphosphate. Asn207 and Asn230 each carry an N-linked (GlcNAc...) asparagine glycan. 1D-myo-inositol hexakisphosphate is bound at residue Lys301. N-linked (GlcNAc...) asparagine glycosylation is found at Asn339 and Asn352. Positions 361 and 362 each coordinate 1D-myo-inositol hexakisphosphate. The N-linked (GlcNAc...) asparagine glycan is linked to Asn376.

This sequence belongs to the histidine acid phosphatase family. Monomer.

Its subcellular location is the secreted. The catalysed reaction is 1D-myo-inositol hexakisphosphate + H2O = 1D-myo-inositol 1,2,4,5,6-pentakisphosphate + phosphate. It catalyses the reaction 1D-myo-inositol 1,2,4,5,6-pentakisphosphate + H2O = 1D-myo-inositol 1,2,5,6-tetrakisphosphate + phosphate. The enzyme catalyses 1D-myo-inositol 1,2,5,6-tetrakisphosphate + H2O = 1D-myo-inositol 1,2,6-trisphosphate + phosphate. It carries out the reaction 1D-myo-inositol 1,2,6-trisphosphate + H2O = 1D-myo-inositol 1,2-bisphosphate + phosphate. The catalysed reaction is 1D-myo-inositol 1,2-bisphosphate + H2O = 1D-myo-inositol 2-phosphate + phosphate. Catalyzes the phosphate monoester hydrolysis of phytic acid (myo-inositol hexakisphosphate), which results in the stepwise formation of myo-inositol pentakis-, tetrakis-, tris-, bis-, and monophosphates, as well as the liberation of inorganic phosphate. Myo-inositol 2-monophosphate is the end product. Has a broad substrate specificity and is also able to dephosphorylate other classic acid phosphatase substrates such as p-nitrophenyl phosphate, phenyl phosphate, fructose 1,6-bisphosphate, glucose 6-phosphate, 3-phosphoglycerate, as well as ADP and ATP. This Aspergillus terreus protein is Phytase A.